The sequence spans 498 residues: NAD(P)H-quinone oxidoreductase subunit 2, chloroplastic (498 aa).

Transmembrane regions (helical) follow at residues 18-38 (LTIL…VIDL), 51-71 (ISMV…GFFT), 87-107 (FFLL…ILCS), 111-131 (LAEF…LSCA), 134-154 (LVTI…LSGY), 168-188 (FLLM…LLYG), 211-231 (IIYL…SLFP), 244-264 (PTPV…ALFT), 278-298 (WHVA…LIAV), 306-326 (MLAF…LSAD), 337-357 (YTFI…LFGL), 379-399 (FSLV…GFFG), 411-431 (GLYS…YYYL), and 470-490 (IAMI…DPII).

The protein belongs to the complex I subunit 2 family. As to quaternary structure, NDH is composed of at least 16 different subunits, 5 of which are encoded in the nucleus.

It localises to the plastid. Its subcellular location is the chloroplast thylakoid membrane. It catalyses the reaction a plastoquinone + NADH + (n+1) H(+)(in) = a plastoquinol + NAD(+) + n H(+)(out). The enzyme catalyses a plastoquinone + NADPH + (n+1) H(+)(in) = a plastoquinol + NADP(+) + n H(+)(out). Its function is as follows. NDH shuttles electrons from NAD(P)H:plastoquinone, via FMN and iron-sulfur (Fe-S) centers, to quinones in the photosynthetic chain and possibly in a chloroplast respiratory chain. The immediate electron acceptor for the enzyme in this species is believed to be plastoquinone. Couples the redox reaction to proton translocation, and thus conserves the redox energy in a proton gradient. This Adiantum capillus-veneris (Maidenhair fern) protein is NAD(P)H-quinone oxidoreductase subunit 2, chloroplastic.